The primary structure comprises 714 residues: DNA gyrase subunit B (714 aa).

The 115-residue stretch at 492–606 (SELYVVEGDS…NGHVFLAQPP (115 aa)) folds into the Toprim domain. Glutamate 498, aspartate 571, and aspartate 573 together coordinate Mg(2+).

This sequence belongs to the type II topoisomerase GyrB family. As to quaternary structure, heterotetramer, composed of two GyrA and two GyrB chains. In the heterotetramer, GyrA contains the active site tyrosine that forms a transient covalent intermediate with DNA, while GyrB binds cofactors and catalyzes ATP hydrolysis. Requires Mg(2+) as cofactor. Mn(2+) serves as cofactor. It depends on Ca(2+) as a cofactor.

The protein resides in the cytoplasm. The enzyme catalyses ATP-dependent breakage, passage and rejoining of double-stranded DNA.. Its activity is regulated as follows. DNA supercoiling is inhibited by EDTA, novobiocin, coumermycin and ciprofloxacin. Functionally, a type II topoisomerase that negatively supercoils closed circular double-stranded DNA in an ATP-dependent manner and also catalyzes the interconversion of other topological isomers of double-stranded DNA rings, including catenanes and knotted rings. Relaxes negatively supercoiled DNA in an ATP-independent manner. A linear reaction intermediate can be trapped in the presence of the antibiotic ciprofloxacin. Negative supercoiling favors strand separation, and DNA replication, transcription, recombination and repair, all of which involve strand separation. Type II topoisomerases break and join 2 DNA strands simultaneously in an ATP-dependent manner. This chain is DNA gyrase subunit B, found in Mycobacterium bovis (strain BCG / Pasteur 1173P2).